A 206-amino-acid chain; its full sequence is MILKLNGYGYSSNSYLIIGKKNILIDPGTSGTFNILMEELERNGIKDIDLIINTHCHFDHTSADYLIEEYFNCPTIIEDKEVKHLKNGDEVTVSSLFGAKLNPPKEIIPLSEIEEELKSYGLEIIRTPGHTYGSISIIYENSLITGDTIFAYGVGRWDLPTGDVIQLRNSINLLERIANERNIDKLYPGHGEIGDRMAFSYAKLFI.

H55, H57, D59, H60, H130, D147, and H190 together coordinate Zn(2+).

This sequence belongs to the metallo-beta-lactamase superfamily. Zn(2+) serves as cofactor.

In Methanocaldococcus jannaschii (strain ATCC 43067 / DSM 2661 / JAL-1 / JCM 10045 / NBRC 100440) (Methanococcus jannaschii), this protein is Probable metallo-hydrolase MJ0888.